The chain runs to 490 residues: Colicin-5 (490 aa).

Polar residues predominate over residues 1–20 (MDKVTDNSPDVESTESTEGS). 2 disordered regions span residues 1-29 (MDKVTDNSPDVESTESTEGSFPTVGVDTG) and 146-171 (QKAREEAEAAEKALREAERQRDEIAR). Residues 146-170 (QKAREEAEAAEKALREAERQRDEIA) are compositionally biased toward basic and acidic residues. The helical transmembrane segment at 447–467 (IVALMFSFIVGVPLGFWGIAI) threads the bilayer.

The protein belongs to the channel forming colicin family.

It is found in the host membrane. This colicin is a channel-forming colicin. This class of transmembrane toxins depolarize the cytoplasmic membrane, leading to dissipation of cellular energy. Functionally, colicins are polypeptide toxins produced by and active against E.coli and closely related bacteria. This chain is Colicin-5 (cfa), found in Escherichia coli.